The following is a 417-amino-acid chain: Cobalamin binding intrinsic factor (417 aa).

The N-terminal stretch at 1-22 (MAWFSLHLLHLLWAAAGTSTWA) is a signal peptide. Disulfide bonds link Cys26–Cys246, Cys103–Cys288, and Cys143–Cys182. The N-linked (GlcNAc...) asparagine glycan is linked to Asn100. Cob(II)alamin is bound at residue Asp171. Ser191 is subject to Phosphoserine. Asn209 is a glycosylation site (N-linked (GlcNAc...) asparagine). Cob(II)alamin contacts are provided by Asp222 and Gln270. Residues Asn311 and Asn330 are each glycosylated (N-linked (GlcNAc...) asparagine). Cob(II)alamin-binding positions include 365-370 (SWGLVV) and 386-395 (WQFLSGKTPL). The N-linked (GlcNAc...) asparagine glycan is linked to Asn413.

This sequence belongs to the eukaryotic cobalamin transport proteins family. As to quaternary structure, interacts with CUBN (via CUB domains).

It localises to the secreted. In terms of biological role, promotes absorption of the essential vitamin cobalamin (Cbl) in the ileum. After interaction with CUBN, the CBLIF-cobalamin complex is internalized via receptor-mediated endocytosis. In Canis lupus familiaris (Dog), this protein is Cobalamin binding intrinsic factor (CBLIF).